Consider the following 363-residue polypeptide: Chorismate synthase (363 aa).

R48 is a binding site for NADP(+). FMN is bound by residues 125–127, 238–239, G278, 293–297, and R319; these read RSS, NA, and KPTAS.

This sequence belongs to the chorismate synthase family. In terms of assembly, homotetramer. It depends on FMNH2 as a cofactor.

The enzyme catalyses 5-O-(1-carboxyvinyl)-3-phosphoshikimate = chorismate + phosphate. It functions in the pathway metabolic intermediate biosynthesis; chorismate biosynthesis; chorismate from D-erythrose 4-phosphate and phosphoenolpyruvate: step 7/7. Catalyzes the anti-1,4-elimination of the C-3 phosphate and the C-6 proR hydrogen from 5-enolpyruvylshikimate-3-phosphate (EPSP) to yield chorismate, which is the branch point compound that serves as the starting substrate for the three terminal pathways of aromatic amino acid biosynthesis. This reaction introduces a second double bond into the aromatic ring system. This chain is Chorismate synthase, found in Acinetobacter baumannii (strain ACICU).